The chain runs to 350 residues: UDP-N-acetylglucosamine--N-acetylmuramyl-(pentapeptide) pyrophosphoryl-undecaprenol N-acetylglucosamine transferase (350 aa).

UDP-N-acetyl-alpha-D-glucosamine contacts are provided by residues 9–11, asparagine 123, arginine 159, serine 181, and glutamine 281; that span reads TGG.

It belongs to the glycosyltransferase 28 family. MurG subfamily.

Its subcellular location is the cell inner membrane. It catalyses the reaction di-trans,octa-cis-undecaprenyl diphospho-N-acetyl-alpha-D-muramoyl-L-alanyl-D-glutamyl-meso-2,6-diaminopimeloyl-D-alanyl-D-alanine + UDP-N-acetyl-alpha-D-glucosamine = di-trans,octa-cis-undecaprenyl diphospho-[N-acetyl-alpha-D-glucosaminyl-(1-&gt;4)]-N-acetyl-alpha-D-muramoyl-L-alanyl-D-glutamyl-meso-2,6-diaminopimeloyl-D-alanyl-D-alanine + UDP + H(+). It functions in the pathway cell wall biogenesis; peptidoglycan biosynthesis. In terms of biological role, cell wall formation. Catalyzes the transfer of a GlcNAc subunit on undecaprenyl-pyrophosphoryl-MurNAc-pentapeptide (lipid intermediate I) to form undecaprenyl-pyrophosphoryl-MurNAc-(pentapeptide)GlcNAc (lipid intermediate II). This is UDP-N-acetylglucosamine--N-acetylmuramyl-(pentapeptide) pyrophosphoryl-undecaprenol N-acetylglucosamine transferase from Helicobacter hepaticus (strain ATCC 51449 / 3B1).